A 306-amino-acid chain; its full sequence is Zinc finger protein 625 (306 aa).

The C2H2-type 1; degenerate zinc-finger motif lies at 31–53; sequence PRVKSCGEVSVGHASLNRHHRAD. 8 C2H2-type zinc fingers span residues 69-91, 97-119, 125-147, 153-175, 181-203, 209-231, 237-259, and 265-287; these read YKCT…EWAH, YDCE…RIMH, YKCN…KRTH, YECK…ERTH, YECS…KITH, and YECK…GRTH. At Y209 the chain carries Phosphotyrosine. Residues 287–306 form a disordered region; sequence HTGEKPCSSNTSKGQGEKIA.

Belongs to the krueppel C2H2-type zinc-finger protein family.

It localises to the nucleus. In terms of biological role, may be involved in transcriptional regulation. In Homo sapiens (Human), this protein is Zinc finger protein 625 (ZNF625).